The primary structure comprises 76 residues: DNA gyrase inhibitor YacG (76 aa).

The Zn(2+) site is built by Cys-7, Cys-10, Cys-26, and Cys-30.

Belongs to the DNA gyrase inhibitor YacG family. Interacts with GyrB. The cofactor is Zn(2+).

Functionally, inhibits all the catalytic activities of DNA gyrase by preventing its interaction with DNA. Acts by binding directly to the C-terminal domain of GyrB, which probably disrupts DNA binding by the gyrase. The chain is DNA gyrase inhibitor YacG from Pseudoalteromonas translucida (strain TAC 125).